A 1325-amino-acid polypeptide reads, in one-letter code: Nonribosomal peptide synthetase (1325 aa).

Residues 248–644 (YQQLDRLSTR…LGEIEYQIQQ (397 aa)) are adenylation. Residues 779 to 856 (EIVNPGEITL…DQARLLRPLS (78 aa)) form the Carrier domain. Position 816 is an O-(pantetheine 4'-phosphoryl)serine (Ser-816). Residues 893-1310 (EDVYPCTPLQ…DDYSTTLHTL (418 aa)) are condensation.

This sequence belongs to the NRP synthetase family. Pantetheine 4'-phosphate is required as a cofactor.

It functions in the pathway antifungal biosynthesis. Nonribosomal peptide synthetase; part of the gene cluster that mediates the biosynthesis of the tetrahydropyranyl antifungal agent lanomycin that acts as an inhibitor of CYP51 and blocks the ergosterol biosynthesis. The biosynthesis probably begins with the formation of an hexaketide, followed by methionine mediated alkylation of C-2 and C-6, and methylation of the reduced C-3 oxygen, pyran forming reductive ring closure, oxygenation of C-4, beta-keto reduction, enoyl reduction and dehydration of the remaining oxygens, and finally, acylation with glycine to complete the biosynthesis. In Pyrenophora dematioidea (Helminthosporium dematioideum), this protein is Nonribosomal peptide synthetase.